The primary structure comprises 488 residues: Tyrosine-protein kinase Srms (488 aa).

Residues 51–112 (PFPQLFLALY…PITHVAKASP (62 aa)) form the SH3 domain. Positions 120–212 (WYFSGVSRTQ…LIQNPLLQPC (93 aa)) constitute an SH2 domain. The 259-residue stretch at 230 to 488 (FALGRKLGEG…KLHAIHRCHP (259 aa)) folds into the Protein kinase domain. Residues 236–244 (LGEGYFGEV) and K258 contribute to the ATP site. D350 functions as the Proton acceptor in the catalytic mechanism. Position 380 is a phosphotyrosine; by autocatalysis (Y380).

Belongs to the protein kinase superfamily. Tyr protein kinase family. SRC subfamily. In terms of assembly, interacts (via the SH2 and SH3 domains) with DOK1. Interacts with KHDRBS1/SAM68 and VIM. Highly expressed in most breast cancers (at protein level).

It is found in the cytoplasm. The enzyme catalyses L-tyrosyl-[protein] + ATP = O-phospho-L-tyrosyl-[protein] + ADP + H(+). Non-receptor tyrosine-protein kinase which phosphorylates DOK1 on tyrosine residues. Also phosphorylates KHDRBS1/SAM68 and VIM on tyrosine residues. Phosphorylation of KHDRBS1 is EGF-dependent. Phosphorylates OTUB1, promoting deubiquitination of RPTOR. The polypeptide is Tyrosine-protein kinase Srms (SRMS) (Homo sapiens (Human)).